The primary structure comprises 527 residues: DNA polymerase epsilon subunit 2 (527 aa).

Belongs to the DNA polymerase epsilon subunit B family. In terms of assembly, component of the DNA polymerase epsilon complex consisting of four subunits: the catalytic subunit POLE and the accessory subunits POLE2, POLE3 and POLE4.

The protein resides in the nucleus. Functionally, accessory component of the DNA polymerase epsilon complex. Participates in DNA repair and in chromosomal DNA replication. This Mus musculus (Mouse) protein is DNA polymerase epsilon subunit 2 (Pole2).